The following is an 843-amino-acid chain: RNA-binding protein 25 (843 aa).

A disordered region spans residues 1-30 (MSFPPHLNRPPMGIPALPPGIPPPQFPGFP). Residues 12–30 (MGIPALPPGIPPPQFPGFP) show a composition bias toward pro residues. The RRM domain occupies 87-164 (TTVFVGNISE…KKLLVKVDAK (78 aa)). Lys135 carries the post-translational modification N6-acetyllysine. Disordered regions lie at residues 171–202 (EWKAKKKASNGNARPETVTNDDEEALDEETKR) and 219–243 (SSELNAPSQESDSHPRKKKKEKKED). Phosphoserine is present on residues Ser226 and Ser229. Glycyl lysine isopeptide (Lys-Gly) (interchain with G-Cter in SUMO2) cross-links involve residues Lys261, Lys273, and Lys430. Basic and acidic residues-rich tracts occupy residues 280–433 (EISK…KRDR) and 521–573 (RLRD…ERRR). Disordered stretches follow at residues 280 to 442 (EISK…DAYE) and 498 to 688 (EFLE…KRKK). Positions 285–644 (RDTHKKLEEE…PNTPGDESPC (360 aa)) are necessary for nuclear speckle localization. Residue Lys578 forms a Glycyl lysine isopeptide (Lys-Gly) (interchain with G-Cter in SUMO2) linkage. At Ser583 the chain carries Phosphoserine. Over residues 590-599 (KQEKEEKREE) the composition is skewed to basic and acidic residues. Residues 621-630 (SSAPSVSSAS) show a composition bias toward low complexity. Lys671 participates in a covalent cross-link: Glycyl lysine isopeptide (Lys-Gly) (interchain with G-Cter in SUMO2). Residues 674-683 (ASNSPGQPNS) are compositionally biased toward polar residues. Residues Ser677 and Ser683 each carry the phosphoserine modification. Glycyl lysine isopeptide (Lys-Gly) (interchain with G-Cter in SUMO2) cross-links involve residues Lys688 and Lys697. Ser703 carries the post-translational modification Phosphoserine. Residue Lys722 forms a Glycyl lysine isopeptide (Lys-Gly) (interchain with G-Cter in SUMO2) linkage. Positions 750 to 843 (PELFAYPLDW…TEAKKIGLVK (94 aa)) constitute a PWI domain.

Interacts with LUC7L3 and SRRM1. Specifically associates with functional splicing complexes, including Sm proteins and U1, U2, U4, U5 and U6 snRNAs. Associates with exon junction complex (EJC) proteins, including APEX1, DDX39B, NCBP1, RBM8A and RNPS1. Interaction with NCBP1 is RNA-dependent. In terms of processing, sumoylated.

It localises to the nucleus speckle. The protein localises to the cytoplasm. In terms of biological role, RNA-binding protein that acts as a regulator of alternative pre-mRNA splicing. Involved in apoptotic cell death through the regulation of the apoptotic factor BCL2L1 isoform expression. Modulates the ratio of proapoptotic BCL2L1 isoform S to antiapoptotic BCL2L1 isoform L mRNA expression. When overexpressed, stimulates proapoptotic BCL2L1 isoform S 5'-splice site (5'-ss) selection, whereas its depletion caused the accumulation of antiapoptotic BCL2L1 isoform L. Promotes BCL2L1 isoform S 5'-ss usage through the 5'-CGGGCA-3' RNA sequence. Its association with LUC7L3 promotes U1 snRNP binding to a weak 5' ss in a 5'-CGGGCA-3'-dependent manner. Binds to the exonic splicing enhancer 5'-CGGGCA-3' RNA sequence located within exon 2 of the BCL2L1 pre-mRNA. Also involved in the generation of an abnormal and truncated splice form of SCN5A in heart failure. This Homo sapiens (Human) protein is RNA-binding protein 25 (RBM25).